The following is a 453-amino-acid chain: Ribulose bisphosphate carboxylase large chain (453 aa).

Residues 1–2 (MS) constitute a propeptide that is removed on maturation. At Pro3 the chain carries N-acetylproline. Lys14 carries the post-translational modification N6,N6,N6-trimethyllysine. Residues Asn123 and Thr173 each coordinate substrate. Catalysis depends on Lys175, which acts as the Proton acceptor. Lys177 contributes to the substrate binding site. Residues Lys201, Asp203, and Glu204 each coordinate Mg(2+). Lys201 bears the N6-carboxylysine mark. The active-site Proton acceptor is the His294. Substrate is bound by residues Arg295, His327, and Ser379.

It belongs to the RuBisCO large chain family. Type I subfamily. As to quaternary structure, heterohexadecamer of 8 large chains and 8 small chains; disulfide-linked. The disulfide link is formed within the large subunit homodimers. The cofactor is Mg(2+). In terms of processing, the disulfide bond which can form in the large chain dimeric partners within the hexadecamer appears to be associated with oxidative stress and protein turnover.

It localises to the plastid. It is found in the chloroplast. The enzyme catalyses 2 (2R)-3-phosphoglycerate + 2 H(+) = D-ribulose 1,5-bisphosphate + CO2 + H2O. The catalysed reaction is D-ribulose 1,5-bisphosphate + O2 = 2-phosphoglycolate + (2R)-3-phosphoglycerate + 2 H(+). RuBisCO catalyzes two reactions: the carboxylation of D-ribulose 1,5-bisphosphate, the primary event in carbon dioxide fixation, as well as the oxidative fragmentation of the pentose substrate in the photorespiration process. Both reactions occur simultaneously and in competition at the same active site. This Hydnophytum formicarum (Ant plant) protein is Ribulose bisphosphate carboxylase large chain.